Here is a 1128-residue protein sequence, read N- to C-terminus: Phytochrome A (1128 aa).

Residues 1–21 are compositionally biased toward low complexity; sequence MSSSRPTQCSSSSSRTRQSSR. The interval 1-24 is disordered; sequence MSSSRPTQCSSSSSRTRQSSRARI. The region spanning 219–404 is the GAF domain; that stretch reads SMEVLCNTVV…VFAVHVNKEF (186 aa). Residue C324 coordinates phytochromobilin. PAS domains are found at residues 620–690 and 750–834; these read VTSE…LQGK and VEGD…LAGD. A Histidine kinase domain is found at 904 to 1124; that stretch reads YMRHAINNPL…TFILSVELAS (221 aa).

This sequence belongs to the phytochrome family. In terms of assembly, homodimer. Contains one covalently linked phytochromobilin chromophore.

Functionally, regulatory photoreceptor which exists in two forms that are reversibly interconvertible by light: the Pr form that absorbs maximally in the red region of the spectrum and the Pfr form that absorbs maximally in the far-red region. Photoconversion of Pr to Pfr induces an array of morphogenic responses, whereas reconversion of Pfr to Pr cancels the induction of those responses. Pfr controls the expression of a number of nuclear genes including those encoding the small subunit of ribulose-bisphosphate carboxylase, chlorophyll A/B binding protein, protochlorophyllide reductase, rRNA, etc. It also controls the expression of its own gene(s) in a negative feedback fashion. The chain is Phytochrome A (PHYA) from Oryza sativa subsp. indica (Rice).